The following is a 125-amino-acid chain: MPTINQLVRKSRKTVKAQSDSPALKNCPQRRGVCTVVKTTTPKKPNSALRKIARVRLTNGYEVSAYIPGVGHNLQEHSVVLIRGGRVKDLPGVRYHIVRGALDSAGVATRMQSRSKYGAKKPKQK.

Residues 1–26 (MPTINQLVRKSRKTVKAQSDSPALKN) form a disordered region. Position 89 is a 3-methylthioaspartic acid (D89).

This sequence belongs to the universal ribosomal protein uS12 family. As to quaternary structure, part of the 30S ribosomal subunit. Contacts proteins S8 and S17. May interact with IF1 in the 30S initiation complex.

Its function is as follows. With S4 and S5 plays an important role in translational accuracy. Interacts with and stabilizes bases of the 16S rRNA that are involved in tRNA selection in the A site and with the mRNA backbone. Located at the interface of the 30S and 50S subunits, it traverses the body of the 30S subunit contacting proteins on the other side and probably holding the rRNA structure together. The combined cluster of proteins S8, S12 and S17 appears to hold together the shoulder and platform of the 30S subunit. The protein is Small ribosomal subunit protein uS12 of Clostridium tetani (strain Massachusetts / E88).